Consider the following 381-residue polypeptide: Alkanesulfonate monooxygenase (381 aa).

Belongs to the SsuD family. In terms of assembly, homotetramer.

The enzyme catalyses an alkanesulfonate + FMNH2 + O2 = an aldehyde + FMN + sulfite + H2O + 2 H(+). Its function is as follows. Catalyzes the desulfonation of aliphatic sulfonates. The protein is Alkanesulfonate monooxygenase of Escherichia coli O6:H1 (strain CFT073 / ATCC 700928 / UPEC).